Here is a 481-residue protein sequence, read N- to C-terminus: 3-isopropylmalate dehydratase large subunit (481 aa).

Residues cysteine 357, cysteine 417, and cysteine 420 each coordinate [4Fe-4S] cluster.

It belongs to the aconitase/IPM isomerase family. LeuC type 1 subfamily. In terms of assembly, heterodimer of LeuC and LeuD. Requires [4Fe-4S] cluster as cofactor.

The enzyme catalyses (2R,3S)-3-isopropylmalate = (2S)-2-isopropylmalate. It functions in the pathway amino-acid biosynthesis; L-leucine biosynthesis; L-leucine from 3-methyl-2-oxobutanoate: step 2/4. Its function is as follows. Catalyzes the isomerization between 2-isopropylmalate and 3-isopropylmalate, via the formation of 2-isopropylmaleate. In Mycolicibacterium gilvum (strain PYR-GCK) (Mycobacterium gilvum (strain PYR-GCK)), this protein is 3-isopropylmalate dehydratase large subunit.